We begin with the raw amino-acid sequence, 165 residues long: Lipoprotein signal peptidase (165 aa).

Transmembrane regions (helical) follow at residues 12-32 (WLWV…LILQ), 70-90 (WFFA…MYRS), and 102-122 (ALII…GFVV). Active-site residues include aspartate 123 and aspartate 141. Residues 137–157 (FNLADSAICIGAALIVLEGFL) form a helical membrane-spanning segment.

This sequence belongs to the peptidase A8 family.

It localises to the cell inner membrane. It catalyses the reaction Release of signal peptides from bacterial membrane prolipoproteins. Hydrolyzes -Xaa-Yaa-Zaa-|-(S,diacylglyceryl)Cys-, in which Xaa is hydrophobic (preferably Leu), and Yaa (Ala or Ser) and Zaa (Gly or Ala) have small, neutral side chains.. It participates in protein modification; lipoprotein biosynthesis (signal peptide cleavage). Its function is as follows. This protein specifically catalyzes the removal of signal peptides from prolipoproteins. The polypeptide is Lipoprotein signal peptidase (Klebsiella aerogenes (strain ATCC 13048 / DSM 30053 / CCUG 1429 / JCM 1235 / KCTC 2190 / NBRC 13534 / NCIMB 10102 / NCTC 10006 / CDC 819-56) (Enterobacter aerogenes)).